A 123-amino-acid chain; its full sequence is Small ribosomal subunit protein uS17 (123 aa).

The protein belongs to the universal ribosomal protein uS17 family. As to quaternary structure, part of the 30S ribosomal subunit.

One of the primary rRNA binding proteins, it binds specifically to the 5'-end of 16S ribosomal RNA. This Pyrobaculum aerophilum (strain ATCC 51768 / DSM 7523 / JCM 9630 / CIP 104966 / NBRC 100827 / IM2) protein is Small ribosomal subunit protein uS17.